The sequence spans 123 residues: S-adenosylmethionine decarboxylase proenzyme 2 (123 aa).

Residue Ser65 is the Schiff-base intermediate with substrate; via pyruvic acid of the active site. Pyruvic acid (Ser); by autocatalysis is present on Ser65. The active-site Proton acceptor; for processing activity is His70. Cys85 serves as the catalytic Proton donor; for catalytic activity.

It belongs to the prokaryotic AdoMetDC family. Type 1 subfamily. As to quaternary structure, heterotetramer of two alpha and two beta chains arranged as a dimer of alpha/beta heterodimers. Requires pyruvate as cofactor. Post-translationally, is synthesized initially as an inactive proenzyme. Formation of the active enzyme involves a self-maturation process in which the active site pyruvoyl group is generated from an internal serine residue via an autocatalytic post-translational modification. Two non-identical subunits are generated from the proenzyme in this reaction, and the pyruvate is formed at the N-terminus of the alpha chain, which is derived from the carboxyl end of the proenzyme. The post-translation cleavage follows an unusual pathway, termed non-hydrolytic serinolysis, in which the side chain hydroxyl group of the serine supplies its oxygen atom to form the C-terminus of the beta chain, while the remainder of the serine residue undergoes an oxidative deamination to produce ammonia and the pyruvoyl group blocking the N-terminus of the alpha chain.

The catalysed reaction is S-adenosyl-L-methionine + H(+) = S-adenosyl 3-(methylsulfanyl)propylamine + CO2. Its pathway is amine and polyamine biosynthesis; S-adenosylmethioninamine biosynthesis; S-adenosylmethioninamine from S-adenosyl-L-methionine: step 1/1. In terms of biological role, catalyzes the decarboxylation of S-adenosylmethionine to S-adenosylmethioninamine (dcAdoMet), the propylamine donor required for the synthesis of the polyamines spermine and spermidine from the diamine putrescine. The polypeptide is S-adenosylmethionine decarboxylase proenzyme 2 (Bacillus cereus (strain ZK / E33L)).